The sequence spans 226 residues: Lipoprotein-releasing system ATP-binding protein LolD (226 aa).

The ABC transporter domain maps to 6 to 226; the sequence is LSVEQVSKSF…QLQQGSLIRI (221 aa). 42-49 contacts ATP; that stretch reads GESGCGKS.

It belongs to the ABC transporter superfamily. Lipoprotein translocase (TC 3.A.1.125) family. In terms of assembly, the complex is composed of two ATP-binding proteins (LolD) and two transmembrane proteins (LolC and LolE).

It localises to the cell inner membrane. Part of the ABC transporter complex LolCDE involved in the translocation of mature outer membrane-directed lipoproteins, from the inner membrane to the periplasmic chaperone, LolA. Responsible for the formation of the LolA-lipoprotein complex in an ATP-dependent manner. This is Lipoprotein-releasing system ATP-binding protein LolD from Treponema pallidum (strain Nichols).